The primary structure comprises 353 residues: Basic membrane protein C (353 aa).

Residues 1-16 (MFKRFIFITLSLLVFA) form the signal peptide. Cys-17 is lipidated: N-palmitoyl cysteine. Residue Cys-17 is the site of S-diacylglycerol cysteine attachment.

This sequence belongs to the BMP lipoprotein family. Monomer.

It localises to the cell inner membrane. Its function is as follows. May be part of an ABC-type nucleoside uptake system involved in the purine salvage pathway. This Borreliella burgdorferi (strain N40) (Borrelia burgdorferi) protein is Basic membrane protein C (bmpC).